We begin with the raw amino-acid sequence, 494 residues long: Syntaphilin (494 aa).

Residues 1–75 (MAMSLPGSRR…GIKPPTPEQY (75 aa)) are disordered. Residues 7–49 (GSRRTSAGSRRRTSPPVSVRDAYGTSSLSSSSNSGSYKGSDSS) are compositionally biased toward low complexity. Positions 79-161 (LQQKEVCIRH…VKNNLIDKDK (83 aa)) form a coiled coil. Disordered stretches follow at residues 191–246 (MAKE…SGFA) and 338–398 (CGTD…GQSV). A phosphoserine mark is found at Ser200 and Ser204. Polar residues predominate over residues 207–217 (RSLTRSSTYTK). Position 214 is a phosphothreonine (Thr214). Position 219 is a phosphoserine (Ser219). A compositionally biased stretch (low complexity) spans 230 to 246 (GDPSSGSAEDGADSGFA). Residues 344 to 353 (SGDRCPELDA) show a composition bias toward basic and acidic residues. Residues 425–444 (YIVDLLAVVVPAVPTVAWLC) traverse the membrane as a helical segment.

Binds to STX1A. Interacts with DNM1; this interaction inhibits the binding of DNM1 to AMPH and DNM1-receptor-mediated endocytosis. In terms of tissue distribution, brain specific. Found in synapses.

It localises to the membrane. It is found in the synapse. The protein localises to the synaptosome. Functionally, inhibits SNARE complex formation by absorbing free STX1A. The sequence is that of Syntaphilin from Homo sapiens (Human).